Reading from the N-terminus, the 307-residue chain is GTPase Era (307 aa).

The region spanning 17–186 (RCGFVAIVGR…LELIKPYLPE (170 aa)) is the Era-type G domain. Positions 25-32 (GRPNVGKS) are G1. 25–32 (GRPNVGKS) serves as a coordination point for GTP. The segment at 51 to 55 (QTTRN) is G2. The segment at 72–75 (DTPG) is G3. GTP is bound by residues 72–76 (DTPGF) and 133–136 (NKID). The segment at 133-136 (NKID) is G4. The segment at 165-167 (VSA) is G5. The KH type-2 domain maps to 217 to 293 (LGEELPYAMN…FLKVWVKVKS (77 aa)).

Belongs to the TRAFAC class TrmE-Era-EngA-EngB-Septin-like GTPase superfamily. Era GTPase family. As to quaternary structure, monomer.

It is found in the cytoplasm. It localises to the cell inner membrane. Functionally, an essential GTPase that binds both GDP and GTP, with rapid nucleotide exchange. Plays a role in 16S rRNA processing and 30S ribosomal subunit biogenesis and possibly also in cell cycle regulation and energy metabolism. In Neisseria meningitidis serogroup A / serotype 4A (strain DSM 15465 / Z2491), this protein is GTPase Era.